Consider the following 311-residue polypeptide: Taste receptor type 2 member 9 (311 aa).

Over 1 to 9 (MPSTIEAIY) the chain is Extracellular. The chain crosses the membrane as a helical span at residues 10-32 (IILIAGELTIGIWGNGFIVLVNC). Over 33–52 (IDWLKRRDVSLIDIILISLA) the chain is Cytoplasmic. A helical transmembrane segment spans residues 53–72 (ISRICLLCVISLDGFFILLF). Over 73–86 (PGTYDTNVLESIMD) the chain is Extracellular. A helical membrane pass occupies residues 87-109 (AVWTFANNSSLWFTSCLSIFYLL). Residues 110 to 128 (KIANISHPFFFWLKLKINK) are Cytoplasmic-facing. The helical transmembrane segment at 129–146 (VILAILLGSFLISLIISF) threads the bilayer. Residues 147–179 (PINGMWYNLFKVSHEENITWAFKVSTIPGAFKQ) are Extracellular-facing. Residue Asn163 is glycosylated (N-linked (GlcNAc...) asparagine). Residues 180–202 (LTLNLGAMVPFILCLISFFLLLF) form a helical membrane-spanning segment. Topologically, residues 203-233 (SLVRHTKQIQLHATGFRDPSTEAHMRAVKAV) are cytoplasmic. The helical transmembrane segment at 234–256 (IIFLLLLILYYPVFLVMTSSTLI) threads the bilayer. Over 257–260 (PQGK) the chain is Extracellular. A helical membrane pass occupies residues 261-283 (LVLMIGDIVTVIFPSSHSFILIM). At 284-311 (GNSKLRAAFLKMLRFVKGFLRRRKPFVP) the chain is on the cytoplasmic side.

Belongs to the G-protein coupled receptor T2R family.

It is found in the membrane. Gustducin-coupled receptor implicated in the perception of bitter compounds in the oral cavity and the gastrointestinal tract. Signals through PLCB2 and the calcium-regulated cation channel TRPM5. The chain is Taste receptor type 2 member 9 (TAS2R9) from Macaca mulatta (Rhesus macaque).